Here is a 467-residue protein sequence, read N- to C-terminus: UDP-N-acetylmuramate--L-alanine ligase (467 aa).

Residue 121–127 (GSHGKTT) coordinates ATP.

The protein belongs to the MurCDEF family.

The protein localises to the cytoplasm. The enzyme catalyses UDP-N-acetyl-alpha-D-muramate + L-alanine + ATP = UDP-N-acetyl-alpha-D-muramoyl-L-alanine + ADP + phosphate + H(+). The protein operates within cell wall biogenesis; peptidoglycan biosynthesis. Its function is as follows. Cell wall formation. The polypeptide is UDP-N-acetylmuramate--L-alanine ligase (Parasynechococcus marenigrum (strain WH8102)).